The chain runs to 171 residues: Large ribosomal subunit protein bL9 (171 aa).

Belongs to the bacterial ribosomal protein bL9 family.

In terms of biological role, binds to the 23S rRNA. In Rickettsia conorii (strain ATCC VR-613 / Malish 7), this protein is Large ribosomal subunit protein bL9.